Consider the following 763-residue polypeptide: Endothelin-converting enzyme 2 (763 aa).

The Cytoplasmic segment spans residues 1–60 (MNVALHELGGGGSMVEYKRAKLRDEESPEITVEGRATRDSLEVGFQKRTRQLFGSHTQLE). Serine 27 bears the Phosphoserine mark. Residues 61 to 81 (LVLAGLILVLAALLLGCLVAL) form a helical; Signal-anchor for type II membrane protein membrane-spanning segment. The Lumenal segment spans residues 82 to 763 (WVHRDPAHST…MNPGQLCEVW (682 aa)). Residues 91-763 (TCVTEACIRV…MNPGQLCEVW (673 aa)) enclose the Peptidase M13 domain. 5 disulfide bridges follow: cysteine 92–cysteine 97, cysteine 115–cysteine 748, cysteine 123–cysteine 708, cysteine 179–cysteine 428, and cysteine 637–cysteine 760. Asparagine 159, asparagine 163, asparagine 204, asparagine 264, asparagine 309, asparagine 376, and asparagine 532 each carry an N-linked (GlcNAc...) asparagine glycan. Histidine 600 lines the Zn(2+) pocket. The active site involves glutamate 601. Histidine 604 is a binding site for Zn(2+). N-linked (GlcNAc...) asparagine glycosylation is found at asparagine 625 and asparagine 633. Residue glutamate 660 participates in Zn(2+) binding. Aspartate 664 functions as the Proton donor in the catalytic mechanism.

The protein belongs to the peptidase M13 family. Zn(2+) serves as cofactor.

It localises to the golgi apparatus membrane. It is found in the cytoplasmic vesicle. Its subcellular location is the secretory vesicle membrane. The enzyme catalyses Hydrolysis of the 21-Trp-|-Val-22 bond in big endothelin to form endothelin 1.. Converts big endothelin-1 to endothelin-1. Also involved in the processing of various neuroendocrine peptides, including neurotensin, angiotensin I, substance P, proenkephalin-derived peptides, and prodynorphin-derived peptides. May play a role in amyloid-beta processing. This Mus musculus (Mouse) protein is Endothelin-converting enzyme 2.